We begin with the raw amino-acid sequence, 233 residues long: Uracil-DNA glycosylase (233 aa).

Catalysis depends on D70, which acts as the Proton acceptor.

This sequence belongs to the uracil-DNA glycosylase (UDG) superfamily. UNG family.

It is found in the cytoplasm. The catalysed reaction is Hydrolyzes single-stranded DNA or mismatched double-stranded DNA and polynucleotides, releasing free uracil.. In terms of biological role, excises uracil residues from the DNA which can arise as a result of misincorporation of dUMP residues by DNA polymerase or due to deamination of cytosine. The polypeptide is Uracil-DNA glycosylase (Oleidesulfovibrio alaskensis (strain ATCC BAA-1058 / DSM 17464 / G20) (Desulfovibrio alaskensis)).